Consider the following 268-residue polypeptide: Undecaprenyl-diphosphatase (268 aa).

The next 8 membrane-spanning stretches (helical) occupy residues 4 to 24, 50 to 70, 84 to 104, 109 to 129, 144 to 164, 185 to 205, 214 to 234, and 247 to 267; these read STTL…FIPV, IQLG…VSVI, VAVL…HGFI, FETP…LLFV, LPLN…VPGV, AEFS…FDLF, SALG…VLVV, and ALFG…LLAG.

This sequence belongs to the UppP family.

It is found in the cell inner membrane. It carries out the reaction di-trans,octa-cis-undecaprenyl diphosphate + H2O = di-trans,octa-cis-undecaprenyl phosphate + phosphate + H(+). Catalyzes the dephosphorylation of undecaprenyl diphosphate (UPP). Confers resistance to bacitracin. This Cereibacter sphaeroides (strain ATCC 17029 / ATH 2.4.9) (Rhodobacter sphaeroides) protein is Undecaprenyl-diphosphatase.